The chain runs to 314 residues: Olfactory receptor 14K1 (314 aa).

The Extracellular segment spans residues 1 to 23 (MTNQTQMMEFLLVRFTENWVLLR). N-linked (GlcNAc...) asparagine glycosylation is present at asparagine 3. Residues 24–44 (LHALLFSLIYLTAVLMNLVII) traverse the membrane as a helical segment. The Cytoplasmic portion of the chain corresponds to 45 to 52 (LLMILDHR). Residues 53–73 (LHMAMYFFLRHLSFLDLCLIS) form a helical membrane-spanning segment. The Extracellular segment spans residues 74–97 (ATVPKSILNSVASTDSISFLGCVL). The cysteines at positions 95 and 187 are disulfide-linked. A helical membrane pass occupies residues 98-118 (QLFLVVLLAGSEIGILTAMSY). The Cytoplasmic segment spans residues 119–131 (DRYAAICCPLHCE). Residues 132 to 152 (AVMSRGLCVQLMALSWLNRGA) traverse the membrane as a helical segment. The Extracellular segment spans residues 153 to 194 (LGLLYTAGTFSLNFYGSDELHQFFCDVPALLKLTCSKEHAII). A helical membrane pass occupies residues 195–215 (SVSVAIGVCYAFSCLVCIVVS). Topologically, residues 216–235 (YVYIFSAVLRISQRQRQSKA) are cytoplasmic. Residues 236–256 (FSNCVPHLIVVTVFLVTGAVA) traverse the membrane as a helical segment. Over 257-269 (YLKPGSDAPSILD) the chain is Extracellular. A helical transmembrane segment spans residues 270–290 (LLVSVFYSVAPPTLNPVIYCL). The Cytoplasmic portion of the chain corresponds to 291–314 (KNKDIKSALSKVLWNVRSSGVMKR).

Belongs to the G-protein coupled receptor 1 family.

Its subcellular location is the cell membrane. Its function is as follows. Odorant receptor. The polypeptide is Olfactory receptor 14K1 (OR14K1) (Homo sapiens (Human)).